Here is a 246-residue protein sequence, read N- to C-terminus: Acetoacetate decarboxylase (246 aa).

Lys116 (schiff-base intermediate with acetoacetate) is an active-site residue.

Belongs to the ADC family. As to quaternary structure, homododecamer.

It carries out the reaction acetoacetate + H(+) = acetone + CO2. In terms of biological role, catalyzes the conversion of acetoacetate to acetone and carbon dioxide. The polypeptide is Acetoacetate decarboxylase (Chromobacterium violaceum (strain ATCC 12472 / DSM 30191 / JCM 1249 / CCUG 213 / NBRC 12614 / NCIMB 9131 / NCTC 9757 / MK)).